Consider the following 93-residue polypeptide: uncharacterized protein (93 aa).

This is an uncharacterized protein from Homo sapiens (Human).